Here is a 429-residue protein sequence, read N- to C-terminus: MKFTESERLQQLSNEYILGGVNSPSRSYKAVGGGAPVVMKEGHGAYLYDVDGNKYIDYLQAYGPIITGHAHPHITEAIQDQAAKGVLYGTPTELEINFSKKLREAVPSLEKIRFVNSGTEAVMTTIRVARAYTKRNKIIKFAGSYHGHSDLVLVAAGSGPSQLGSPDSAGVPQSVAQEVITVPFNDIESYREAIDYWKDDIAAVLVEPIVGNFGMVMPQPGFLEEVNKISHDNGTLVIYDEVITAFRFHYGAAQDLLGVKPDLTAFGKIVGGGLPIGGYGGRQDIMEHVAPLGPAYQAGTMAGNPLSMRAGIALLEVLEQEGVYDKLDQLGRRLEEGLQKLIDKHHITATINRIYGSLTLYFTNEKVTHYEQVENSDGDAFAQFFKLMLNQGINLAPSKFEAWFLTTEHTEEDIDRTLEAADYAFSKMK.

Position 268 is an N6-(pyridoxal phosphate)lysine (lysine 268).

This sequence belongs to the class-III pyridoxal-phosphate-dependent aminotransferase family. HemL subfamily. Homodimer. Requires pyridoxal 5'-phosphate as cofactor.

The protein localises to the cytoplasm. The enzyme catalyses (S)-4-amino-5-oxopentanoate = 5-aminolevulinate. The protein operates within porphyrin-containing compound metabolism; protoporphyrin-IX biosynthesis; 5-aminolevulinate from L-glutamyl-tRNA(Glu): step 2/2. This chain is Glutamate-1-semialdehyde 2,1-aminomutase 2, found in Staphylococcus epidermidis (strain ATCC 35984 / DSM 28319 / BCRC 17069 / CCUG 31568 / BM 3577 / RP62A).